The following is a 248-amino-acid chain: 4-hydroxy-tetrahydrodipicolinate reductase (248 aa).

NAD(+) is bound by residues 74 to 76 and 99 to 102; these read GTT and SANF. The active-site Proton donor/acceptor is His134. Residue His135 participates in (S)-2,3,4,5-tetrahydrodipicolinate binding. Catalysis depends on Lys138, which acts as the Proton donor. 144 to 145 lines the (S)-2,3,4,5-tetrahydrodipicolinate pocket; that stretch reads GT.

Belongs to the DapB family.

It is found in the cytoplasm. The enzyme catalyses (S)-2,3,4,5-tetrahydrodipicolinate + NAD(+) + H2O = (2S,4S)-4-hydroxy-2,3,4,5-tetrahydrodipicolinate + NADH + H(+). It catalyses the reaction (S)-2,3,4,5-tetrahydrodipicolinate + NADP(+) + H2O = (2S,4S)-4-hydroxy-2,3,4,5-tetrahydrodipicolinate + NADPH + H(+). Its pathway is amino-acid biosynthesis; L-lysine biosynthesis via DAP pathway; (S)-tetrahydrodipicolinate from L-aspartate: step 4/4. In terms of biological role, catalyzes the conversion of 4-hydroxy-tetrahydrodipicolinate (HTPA) to tetrahydrodipicolinate. The chain is 4-hydroxy-tetrahydrodipicolinate reductase from Chlorobium phaeobacteroides (strain DSM 266 / SMG 266 / 2430).